We begin with the raw amino-acid sequence, 367 residues long: tRNA-dihydrouridine(20a/20b) synthase [NAD(P)+] (367 aa).

FMN is bound by residues 45 to 47 and glutamine 99; that span reads PMV. Residue cysteine 128 is the Proton donor of the active site. FMN-binding positions include lysine 169, histidine 197, 231–233, and 255–256; these read NGD and VR.

It belongs to the Dus family. Dus4 subfamily. The cofactor is FMN.

It catalyses the reaction 5,6-dihydrouridine(20a) in tRNA + NADP(+) = uridine(20a) in tRNA + NADPH + H(+). The catalysed reaction is 5,6-dihydrouridine(20a) in tRNA + NAD(+) = uridine(20a) in tRNA + NADH + H(+). The enzyme catalyses 5,6-dihydrouridine(20b) in tRNA + NAD(+) = uridine(20b) in tRNA + NADH + H(+). It carries out the reaction 5,6-dihydrouridine(20b) in tRNA + NADP(+) = uridine(20b) in tRNA + NADPH + H(+). It catalyses the reaction a 5,6-dihydrouridine in mRNA + NAD(+) = a uridine in mRNA + NADH + H(+). The catalysed reaction is a 5,6-dihydrouridine in mRNA + NADP(+) = a uridine in mRNA + NADPH + H(+). In terms of biological role, catalyzes the synthesis of dihydrouridine, a modified base found in the D-loop of most tRNAs. Specifically modifies U20a and U20b in cytoplasmic tRNAs. Also able to mediate dihydrouridylation of some mRNAs, thereby affecting their translation. The sequence is that of tRNA-dihydrouridine(20a/20b) synthase [NAD(P)+] from Saccharomyces cerevisiae (strain ATCC 204508 / S288c) (Baker's yeast).